The sequence spans 401 residues: Probable sodium/metabolite cotransporter BASS1, chloroplastic (401 aa).

Residues 1–70 (MASAISLSLL…RRSRFDFVPR (70 aa)) constitute a chloroplast transit peptide. The next 9 membrane-spanning stretches (helical) occupy residues 92 to 112 (FVGEAVSTAFPIWVSLGCLLG), 122 to 142 (VTPNWTIVGLTITMLGMGMTL), 156 to 176 (ELFAGFLLQYSVMPLSAFFVS), 187 to 207 (AGLILVGCCPGGTASNIVTYI), 212 to 232 (VALSVLMTAASTVSAVIMTPL), 247 to 267 (LGLLMSTLQVVLLPVLAGAFL), 278 to 298 (VSPVMPPIAVGTVAILCGYAI), 311 to 331 (QVVLASCLLHISGFLFGYLFS), and 371 to 391 (VPCAVSSVCHSILGSVLAGIW).

It belongs to the bile acid:sodium symporter (BASS) (TC 2.A.28) family.

Its subcellular location is the membrane. It is found in the plastid. The protein localises to the chloroplast envelope. Functionally, may function as sodium-coupled metabolite transporter across the chloroplast envelope. The sequence is that of Probable sodium/metabolite cotransporter BASS1, chloroplastic (BASS1) from Arabidopsis thaliana (Mouse-ear cress).